Consider the following 130-residue polypeptide: Small ribosomal subunit protein uS9 (130 aa).

Belongs to the universal ribosomal protein uS9 family.

The protein is Small ribosomal subunit protein uS9 of Aeromonas hydrophila subsp. hydrophila (strain ATCC 7966 / DSM 30187 / BCRC 13018 / CCUG 14551 / JCM 1027 / KCTC 2358 / NCIMB 9240 / NCTC 8049).